We begin with the raw amino-acid sequence, 79 residues long: Acyl carrier protein (79 aa).

A Carrier domain is found at 1–76 (MSLEDDVIAI…DVFTYIKKRQ (76 aa)). Ser36 carries the post-translational modification O-(pantetheine 4'-phosphoryl)serine.

The protein belongs to the acyl carrier protein (ACP) family. 4'-phosphopantetheine is transferred from CoA to a specific serine of apo-ACP by AcpS. This modification is essential for activity because fatty acids are bound in thioester linkage to the sulfhydryl of the prosthetic group.

The protein localises to the cytoplasm. It participates in lipid metabolism; fatty acid biosynthesis. Carrier of the growing fatty acid chain in fatty acid biosynthesis. The polypeptide is Acyl carrier protein (Chlamydia pneumoniae (Chlamydophila pneumoniae)).